Here is a 492-residue protein sequence, read N- to C-terminus: Trichothecene C-15 hydroxylase (492 aa).

The helical transmembrane segment at 6–26 (LWPLLALSGGTGLAYLVVVVV) threads the bilayer. Positions 88 to 106 (AMKDVRGHRKSGEPEHGKD) are enriched in basic and acidic residues. Positions 88–116 (AMKDVRGHRKSGEPEHGKDPISVQSNGDN) are disordered. Residues asparagine 124, asparagine 198, and asparagine 290 are each glycosylated (N-linked (GlcNAc...) asparagine). Cysteine 438 is a heme binding site.

The protein belongs to the cytochrome P450 family. Heme serves as cofactor.

The protein resides in the membrane. Its pathway is sesquiterpene biosynthesis; trichothecene biosynthesis. Trichothecene C-15 hydroxylase; part of the core gene cluster that mediates the biosynthesis of trichothecenes, a very large family of chemically related bicyclic sesquiterpene compounds acting as mycotoxins, including T2-toxin. The biosynthesis of trichothecenes begins with the cyclization of farnesyl diphosphate to trichodiene and is catalyzed by the trichodiene synthase TRI5. Trichodiene undergoes a series of oxygenations catalyzed by the cytochrome P450 monooxygenase TRI4. TRI4 controls the addition of four oxygens at C-2, C-3, C-11, and the C-12, C-13-epoxide to form the intermediate isotrichotriol. Isotrichotriol then undergoes a non-enzymatic isomerization and cyclization to form isotrichodermol. During this process, the oxygen at the C-2 position becomes the pyran ring oxygen and the hydroxyl group at C-11 is lost. More complex type A trichothecenes are built by modifying isotrichodermol through a series of paired hydroxylation and acetylation or acylation steps. Isotrichodermol is converted to isotrichodermin by the acetyltransferase TRI101. TRI101 encodes a C-3 transacetylase that acts as a self-protection or resistance factor during biosynthesis and that the presence of a free C-3 hydroxyl group is a key component of Fusarium trichothecene phytotoxicity. A second hydroxyl group is added to C-15 by the trichothecene C-15 hydroxylase TRI11, producing 15-decalonectrin, which is then acetylated by TRI3, producing calonectrin. A third hydroxyl group is added at C-4 by the cytochrome P450 monooxygenase TRI13, converting calonectrin to 3,15-diacetoxyspirpenol, which is subsequently acetylated by the acetyltransferase TRI7. A fourth hydroxyl group is added to C-8 by the cytochrome P450 monooxygenase TRI1, followed by the addition of an isovaleryl moiety by TRI16. Finally, the acetyl group is removed from the C-3 position by the trichothecene C-3 esterase TRI8 to produce T-2 toxin. This Fusarium sporotrichioides protein is Trichothecene C-15 hydroxylase.